The sequence spans 78 residues: Small ribosomal subunit protein bS16c (78 aa).

This sequence belongs to the bacterial ribosomal protein bS16 family.

It localises to the plastid. Its subcellular location is the chloroplast. This chain is Small ribosomal subunit protein bS16c, found in Daucus carota (Wild carrot).